Reading from the N-terminus, the 402-residue chain is D-galactonate dehydratase family member RspA (402 aa).

Substrate-binding residues include Asn37 and His122. Tyr159 functions as the Proton donor/acceptor in the catalytic mechanism. Asp210 contributes to the Mg(2+) binding site. His212 serves as the catalytic Proton donor/acceptor. 2 residues coordinate Mg(2+): Glu236 and Glu262. Substrate is bound by residues Glu262, Arg283, His312, Asp316, and Glu339.

Belongs to the mandelate racemase/muconate lactonizing enzyme family. GalD subfamily. Mg(2+) is required as a cofactor.

It catalyses the reaction D-mannonate = 2-dehydro-3-deoxy-D-gluconate + H2O. Has low D-mannonate dehydratase activity (in vitro), suggesting that this is not a physiological substrate and that it has no significant role in D-mannonate degradation in vivo. Has no detectable activity with a panel of 70 other acid sugars (in vitro). The chain is D-galactonate dehydratase family member RspA (rspA) from Cellvibrio japonicus (strain Ueda107) (Pseudomonas fluorescens subsp. cellulosa).